We begin with the raw amino-acid sequence, 1158 residues long: ATP-dependent helicase/deoxyribonuclease subunit B (1158 aa).

The region spanning 1-275 (MTLHAYLGRA…QYFNQLYRFN (275 aa)) is the UvrD-like helicase ATP-binding domain. Position 8-15 (8-15 (GRAGTGKS)) interacts with ATP. One can recognise a UvrD-like helicase C-terminal domain in the interval 269–583 (NQLYRFNNQD…SIGTMDLAKV (315 aa)). [4Fe-4S] cluster-binding residues include cysteine 784, cysteine 1112, cysteine 1115, and cysteine 1121.

It belongs to the helicase family. AddB/RexB type 1 subfamily. As to quaternary structure, heterodimer of AddA and AddB. It depends on Mg(2+) as a cofactor. Requires [4Fe-4S] cluster as cofactor.

Functionally, the heterodimer acts as both an ATP-dependent DNA helicase and an ATP-dependent, dual-direction single-stranded exonuclease. Recognizes the chi site generating a DNA molecule suitable for the initiation of homologous recombination. The AddB subunit has 5' -&gt; 3' nuclease activity but not helicase activity. In Staphylococcus aureus (strain COL), this protein is ATP-dependent helicase/deoxyribonuclease subunit B.